Here is a 335-residue protein sequence, read N- to C-terminus: MQRNWRELIKPKRLEVETKGLPNTYGKFECEPLERGFGITLGNALRRVLLSSLQGAAITSVKVDGVLHEFSTIPGVLEDVTDVILNLKEVRFKMHSDGPRLVVIEKDGEGEVAAGDIQGGPHVEVLNPEQHICTLEKDARLRMELTVKQGKGYLPADRNIEENQPIGTIPIDAIFSPIRKVSYTVTQARVAQITDYDKLTMEIWSDGSVKPDDALAYSAKILKDQLTIFINFEEEMETTEEEVRAEPVFNDHLFRSVDELELSVRSANCLKNADIRYIGELVQKTEAEMLKTKNFGRKSLNEIKEILTEMGLSLGMKLENFPSRDDIENRRKEQE.

An alpha N-terminal domain (alpha-NTD) region spans residues 1 to 233 (MQRNWRELIK…DQLTIFINFE (233 aa)). The tract at residues 249 to 335 (FNDHLFRSVD…DIENRRKEQE (87 aa)) is alpha C-terminal domain (alpha-CTD).

This sequence belongs to the RNA polymerase alpha chain family. In terms of assembly, homodimer. The RNAP catalytic core consists of 2 alpha, 1 beta, 1 beta' and 1 omega subunit. When a sigma factor is associated with the core the holoenzyme is formed, which can initiate transcription.

It catalyses the reaction RNA(n) + a ribonucleoside 5'-triphosphate = RNA(n+1) + diphosphate. Its function is as follows. DNA-dependent RNA polymerase catalyzes the transcription of DNA into RNA using the four ribonucleoside triphosphates as substrates. The sequence is that of DNA-directed RNA polymerase subunit alpha from Syntrophobacter fumaroxidans (strain DSM 10017 / MPOB).